Here is a 103-residue protein sequence, read N- to C-terminus: Cell division topological specificity factor (103 aa).

It belongs to the MinE family.

Its function is as follows. Prevents the cell division inhibition by proteins MinC and MinD at internal division sites while permitting inhibition at polar sites. This ensures cell division at the proper site by restricting the formation of a division septum at the midpoint of the long axis of the cell. This chain is Cell division topological specificity factor, found in Prochlorococcus marinus (strain MIT 9211).